Here is a 193-residue protein sequence, read N- to C-terminus: Potassium-transporting ATPase KdpC subunit (193 aa).

Residues 14–34 (ITFTFLVLCGLVYPLIVTGIA) form a helical membrane-spanning segment.

The protein belongs to the KdpC family. The system is composed of three essential subunits: KdpA, KdpB and KdpC.

Its subcellular location is the cell membrane. Its function is as follows. Part of the high-affinity ATP-driven potassium transport (or Kdp) system, which catalyzes the hydrolysis of ATP coupled with the electrogenic transport of potassium into the cytoplasm. This subunit acts as a catalytic chaperone that increases the ATP-binding affinity of the ATP-hydrolyzing subunit KdpB by the formation of a transient KdpB/KdpC/ATP ternary complex. The protein is Potassium-transporting ATPase KdpC subunit of Bacillus anthracis (strain A0248).